Reading from the N-terminus, the 371-residue chain is Probable endolytic peptidoglycan transglycosylase RlpA (371 aa).

Positions 1 to 25 (MNQRHLWTIVALSVTVLGTPAVGRT) are cleaved as a signal peptide. Low complexity predominate over residues 177 to 191 (LVASQSQNKSSSSQQ). The disordered stretch occupies residues 177 to 196 (LVASQSQNKSSSSQQKSERY).

This sequence belongs to the RlpA family.

Lytic transglycosylase with a strong preference for naked glycan strands that lack stem peptides. This Nostoc sp. (strain PCC 7120 / SAG 25.82 / UTEX 2576) protein is Probable endolytic peptidoglycan transglycosylase RlpA.